We begin with the raw amino-acid sequence, 187 residues long: Elongation factor P (187 aa).

Belongs to the elongation factor P family.

Its subcellular location is the cytoplasm. It participates in protein biosynthesis; polypeptide chain elongation. Its function is as follows. Involved in peptide bond synthesis. Stimulates efficient translation and peptide-bond synthesis on native or reconstituted 70S ribosomes in vitro. Probably functions indirectly by altering the affinity of the ribosome for aminoacyl-tRNA, thus increasing their reactivity as acceptors for peptidyl transferase. This chain is Elongation factor P, found in Thermodesulfovibrio yellowstonii (strain ATCC 51303 / DSM 11347 / YP87).